The sequence spans 287 residues: Shikimate dehydrogenase (NADP(+)) (287 aa).

Shikimate is bound by residues 21 to 23 (SKS) and threonine 68. Lysine 72 acts as the Proton acceptor in catalysis. Shikimate-binding residues include asparagine 93 and aspartate 109. Residues 133 to 137 (GAGGA), 157 to 162 (NRTQTK), and methionine 226 contribute to the NADP(+) site. A shikimate-binding site is contributed by tyrosine 228. Glycine 250 provides a ligand contact to NADP(+).

This sequence belongs to the shikimate dehydrogenase family. Homodimer.

It carries out the reaction shikimate + NADP(+) = 3-dehydroshikimate + NADPH + H(+). It participates in metabolic intermediate biosynthesis; chorismate biosynthesis; chorismate from D-erythrose 4-phosphate and phosphoenolpyruvate: step 4/7. Involved in the biosynthesis of the chorismate, which leads to the biosynthesis of aromatic amino acids. Catalyzes the reversible NADPH linked reduction of 3-dehydroshikimate (DHSA) to yield shikimate (SA). The sequence is that of Shikimate dehydrogenase (NADP(+)) from Shewanella oneidensis (strain ATCC 700550 / JCM 31522 / CIP 106686 / LMG 19005 / NCIMB 14063 / MR-1).